The chain runs to 194 residues: Protein GrpE 1 (194 aa).

The tract at residues 1-22 is disordered; sequence MIHNEEEQLEKKIEKNQDPKIN.

This sequence belongs to the GrpE family. In terms of assembly, homodimer.

It is found in the cytoplasm. In terms of biological role, participates actively in the response to hyperosmotic and heat shock by preventing the aggregation of stress-denatured proteins, in association with DnaK and GrpE. It is the nucleotide exchange factor for DnaK and may function as a thermosensor. Unfolded proteins bind initially to DnaJ; upon interaction with the DnaJ-bound protein, DnaK hydrolyzes its bound ATP, resulting in the formation of a stable complex. GrpE releases ADP from DnaK; ATP binding to DnaK triggers the release of the substrate protein, thus completing the reaction cycle. Several rounds of ATP-dependent interactions between DnaJ, DnaK and GrpE are required for fully efficient folding. The chain is Protein GrpE 1 from Buchnera aphidicola subsp. Acyrthosiphon pisum (strain APS) (Acyrthosiphon pisum symbiotic bacterium).